A 201-amino-acid polypeptide reads, in one-letter code: Protein lin-7 homolog B (201 aa).

The Kinase interacting site signature appears at 1–13 (MAALVEPLGLERE). In terms of domain architecture, L27 spans 10–65 (LEREVSRAVELLERLQRSGELPPQKLQALQRVLQSRFCSAIREVYEQLYDTLDITG). Residues 93–175 (VVELPKTDEG…SVKLVVRYTP (83 aa)) enclose the PDZ domain.

Belongs to the lin-7 family. Forms a complex with CASK and CASKIN1. Component of the brain-specific heterotrimeric complex (LIN-10-LIN-2-LIN-7 complex) composed of at least APBA1, CASK, and LIN7, which associates with the motor protein KIF17 to transport vesicles along microtubules. Forms a heterotrimeric complex composed of MMP5, LIN7B and PATJ; the N-terminal L27 domain of PALS1 interacts with the L27 domain of PATJ and the C-terminal L27 domain of PALS1 interacts with the L27 domain of LIN7B. Forms a heterotrimeric complex with DLG1 and CASK via their L27 domains. Interacts with DLG4 and GRIN2B as well as CDH1 and CTNNB1, the channels KCNJ12/Kir2.2, KCNJ4/Kir2.3 and probably KCNJ2/Kir2.1 and SLC6A12/BGT-1 via its PDZ domain. The association of LIN7A with cadherin and beta-catenin is calcium-dependent, occurs at synaptic junctions and requires the actin cytoskeleton. Interacts with EGFR, ERBB2, ERBB3 and ERBB4 with both PDZ and KID domains. Interacts with ASIC3. Interacts with TOPK. Interacts with RTKN. Associates with KIF17 via APBA1. Interacts with APBA1. Interacts with MPP7. Interacts with DLG2. Interacts with DLG3.

Its subcellular location is the cell membrane. It is found in the basolateral cell membrane. It localises to the cell junction. The protein resides in the postsynaptic density membrane. The protein localises to the tight junction. Plays a role in establishing and maintaining the asymmetric distribution of channels and receptors at the plasma membrane of polarized cells. Forms membrane-associated multiprotein complexes that may regulate delivery and recycling of proteins to the correct membrane domains. The tripartite complex composed of LIN7 (LIN7A, LIN7B or LIN7C), CASK and APBA1 associates with the motor protein KIF17 to transport vesicles containing N-methyl-D-aspartate (NMDA) receptor subunit NR2B along microtubules. This complex may have the potential to couple synaptic vesicle exocytosis to cell adhesion in brain. Ensures the proper localization of GRIN2B (subunit 2B of the NMDA receptor) to neuronal postsynaptic density and may function in localizing synaptic vesicles at synapses where it is recruited by beta-catenin and cadherin. Required to localize Kir2 channels, GABA transporter (SLC6A12) and EGFR/ERBB1, ERBB2, ERBB3 and ERBB4 to the basolateral membrane of epithelial cells. May increase the amplitude of ASIC3 acid-evoked currents by stabilizing the channel at the cell surface. The protein is Protein lin-7 homolog B (LIN7B) of Bos taurus (Bovine).